The sequence spans 831 residues: Translation initiation factor IF-2 (831 aa).

Residues Thr329 to Lys499 enclose the tr-type G domain. The segment at Gly338–Thr345 is G1. Position 338–345 (Gly338–Thr345) interacts with GTP. Residues Gly363–His367 form a G2 region. Residues Asp385 to Gly388 form a G3 region. GTP-binding positions include Asp385–His389 and Asn439–Asp442. The interval Asn439–Asp442 is G4. Positions Ser475–Leu477 are G5.

The protein belongs to the TRAFAC class translation factor GTPase superfamily. Classic translation factor GTPase family. IF-2 subfamily.

The protein resides in the cytoplasm. Its function is as follows. One of the essential components for the initiation of protein synthesis. Protects formylmethionyl-tRNA from spontaneous hydrolysis and promotes its binding to the 30S ribosomal subunits. Also involved in the hydrolysis of GTP during the formation of the 70S ribosomal complex. The chain is Translation initiation factor IF-2 (infB) from Rickettsia prowazekii (strain Madrid E).